We begin with the raw amino-acid sequence, 1488 residues long: Phenolphthiocerol/phthiocerol polyketide synthase subunit E (1488 aa).

A Ketosynthase family 3 (KS3) domain is found at 5 to 438; it reads ENAIAVVGMA…GTNAHVVLEE (434 aa). Active-site for beta-ketoacyl synthase activity residues include C184, H320, and H361. Positions 551-868 are acyltransferase; that stretch reads VFLFPGQGAQ…GELWSAGVEV (318 aa). S641 functions as the For malonyltransferase activity in the catalytic mechanism. Residues 930 to 1004 enclose the Carrier domain; it reads NGESQTEVTL…SLTAAVDASF (75 aa). S965 is subject to O-(pantetheine 4'-phosphoryl)serine. Residue 1286 to 1331 participates in NADP(+) binding; that stretch reads EGVVAVELEGEGRSVLRPDVDLRRTVGWFTTYYPVPLACATGLGAL.

NADP(+) is required as a cofactor. Pantetheine 4'-phosphate serves as cofactor.

It carries out the reaction icosanoyl-[(phenol)carboxyphthiodiolenone synthase] + 2 (S)-methylmalonyl-CoA + 3 malonyl-CoA + 5 NADPH + 10 H(+) = C32-carboxyphthiodiolenone-[(phenol)carboxyphthiodiolenone synthase] + 5 CO2 + 5 NADP(+) + 5 CoA + 2 H2O. It catalyses the reaction docosanoyl-[(phenol)carboxyphthiodiolenone synthase] + 2 (S)-methylmalonyl-CoA + 3 malonyl-CoA + 5 NADPH + 10 H(+) = C34-carboxyphthiodiolenone-[(phenol)carboxyphthiodiolenone synthase] + 5 CO2 + 5 NADP(+) + 5 CoA + 2 H2O. The catalysed reaction is 17-(4-hydroxyphenyl)heptadecanoyl-[(phenol)carboxyphthiodiolenone synthase] + 2 (S)-methylmalonyl-CoA + 3 malonyl-CoA + 5 NADPH + 10 H(+) = C35-(phenol)carboxyphthiodiolenone-[(phenol)carboxyphthiodiolenone synthase] + 5 CO2 + 5 NADP(+) + 5 CoA + 2 H2O. The enzyme catalyses 19-(4-hydroxyphenyl)nonadecanoyl-[(phenol)carboxyphthiodiolenone synthase] + 2 (S)-methylmalonyl-CoA + 3 malonyl-CoA + 5 NADPH + 10 H(+) = C37-(phenol)carboxyphthiodiolenone-[(phenol)carboxyphthiodiolenone synthase] + 5 CO2 + 5 NADP(+) + 5 CoA + 2 H2O. It participates in lipid metabolism; fatty acid biosynthesis. Functionally, part of the PpsABCDE complex involved in the biosynthesis of the lipid core common to phthiocerols and phenolphthiocerols by successive additions of malonyl-CoA or methylmalonyl-CoA extender units. PpsA can accept as substrate the activated forms of either icosanoyl (C20), docosanoyl (C22) or lignoceroyl (C24) groups from FadD26, or a (4-hydroxyphenyl)-C17 or (4-hydroxyphenyl)-C19 fatty acyl from FadD29. PpsA initiates the biosynthesis and extends its substrate using a malonyl-CoA extender unit. The PpsB and PpsC proteins add the second and third malonyl-CoA extender units. PpsD adds an (R)-methylmalonyl unit and PpsE adds a second (R)-methylmalonyl unit. The incorporation of the methylmalonyl units results in formation of two branched methyl groups in the elongated product. The protein is Phenolphthiocerol/phthiocerol polyketide synthase subunit E (ppsE) of Mycobacterium bovis (strain ATCC BAA-935 / AF2122/97).